The sequence spans 317 residues: Petrobactin-binding protein YclQ (317 aa).

The N-terminal stretch at 1–19 (MKKFALLFIALVTAVVISA) is a signal peptide. A lipid anchor (N-palmitoyl cysteine) is attached at Cys-20. The S-diacylglycerol cysteine moiety is linked to residue Cys-20. Residues 56-317 (KVVVFDFGSL…IKEVKDGLEK (262 aa)) form the Fe/B12 periplasmic-binding domain.

It belongs to the bacterial solute-binding protein 8 family. In terms of assembly, the complex is composed of two ATP-binding proteins (YclP), two transmembrane proteins (YclN and YclO) and a solute-binding protein (YclQ). Interacts with FloT.

It is found in the cell membrane. The protein localises to the membrane raft. Part of the ABC transporter complex YclNOPQ involved in uptake of ferric-petrobactin. Petrobactin is a photoreactive 3,4-catecholate siderophore produced by many members of the B.cereus group, including B.anthracis. Binds selectively iron-free and ferric petrobactin and the petrobactin precursor 3,4-dihydroxybenzoic acid (3,4-DHB). The chain is Petrobactin-binding protein YclQ (yclQ) from Bacillus subtilis (strain 168).